The following is a 179-amino-acid chain: Large ribosomal subunit protein uL6 (179 aa).

The protein belongs to the universal ribosomal protein uL6 family. Part of the 50S ribosomal subunit.

Its function is as follows. This protein binds to the 23S rRNA, and is important in its secondary structure. It is located near the subunit interface in the base of the L7/L12 stalk, and near the tRNA binding site of the peptidyltransferase center. The chain is Large ribosomal subunit protein uL6 from Bifidobacterium longum subsp. infantis (strain ATCC 15697 / DSM 20088 / JCM 1222 / NCTC 11817 / S12).